The primary structure comprises 240 residues: Uridylate kinase (240 aa).

Residues 15-18 (KISG), Gly58, and Arg62 contribute to the ATP site. UMP-binding positions include Asp77 and 138–145 (TGNPLFTT). ATP-binding residues include Thr165, Tyr171, and Asp174.

The protein belongs to the UMP kinase family. As to quaternary structure, homohexamer.

It localises to the cytoplasm. It carries out the reaction UMP + ATP = UDP + ADP. The protein operates within pyrimidine metabolism; CTP biosynthesis via de novo pathway; UDP from UMP (UMPK route): step 1/1. With respect to regulation, inhibited by UTP. In terms of biological role, catalyzes the reversible phosphorylation of UMP to UDP. This Buchnera aphidicola subsp. Schizaphis graminum (strain Sg) protein is Uridylate kinase.